Here is a 183-residue protein sequence, read N- to C-terminus: MKKKTTLSEEDQALFRQLMAGTRKIKQDTIVHRPQRKKISEVPVKRLIQEQADASHYFSDEFQPLLNTEGPVKYVRPDVSHFEAKKLRRGDYSPELFLDLHGLTQLQAKQELGALIAACRREHVFCACVMHGHGKHILKQQTPLWLAQHPHVMAFHQAPKVYGGDAALLVLIEVDEWLPPELP.

One can recognise a Smr domain in the interval 98–173 (LDLHGLTQLQ…GDAALLVLIE (76 aa)).

It belongs to the SmrB family. As to quaternary structure, associates with collided ribosomes, but not with correctly translating polysomes.

Acts as a ribosome collision sensor. Detects stalled/collided disomes (pairs of ribosomes where the leading ribosome is stalled and a second ribosome has collided with it) and endonucleolytically cleaves mRNA at the 5' boundary of the stalled ribosome. Stalled/collided disomes form a new interface (primarily via the 30S subunits) that binds SmrB. Cleaved mRNA becomes available for tmRNA ligation, leading to ribosomal subunit dissociation and rescue of stalled ribosomes. This Escherichia coli O7:K1 (strain IAI39 / ExPEC) protein is Ribosome rescue factor SmrB.